Reading from the N-terminus, the 506-residue chain is 7,8-dihydro-6-hydroxymethylpterin dimethyltransferase (506 aa).

6 residues coordinate [4Fe-4S] cluster: C73, C77, C80, C98, C102, and C105. The region spanning 82–300 (NHKSTTILAN…FIKLVEEQTD (219 aa)) is the Radical SAM core domain.

This sequence belongs to the radical SAM superfamily. Requires [4Fe-4S] cluster as cofactor. It depends on S-adenosyl-L-methionine as a cofactor.

It participates in cofactor biosynthesis; 5,6,7,8-tetrahydromethanopterin biosynthesis. Is responsible for the addition of methyl groups at C-7 and C-9 of the pterin ring during methanopterin (MPT) biosynthesis. Catalyzes methylation of 7,8-dihydro-6-hydroxymethylpterin, likely using methylenetetrahydromethanopterin as a methyl group donor, via a radical-based mechanism. In Methanocaldococcus jannaschii (strain ATCC 43067 / DSM 2661 / JAL-1 / JCM 10045 / NBRC 100440) (Methanococcus jannaschii), this protein is 7,8-dihydro-6-hydroxymethylpterin dimethyltransferase.